A 245-amino-acid polypeptide reads, in one-letter code: Mannose/glucose-specific lectin (245 aa).

The a carbohydrate site is built by Asp87 and Gly107. The N-linked (GlcNAc...) asparagine glycan is linked to Asn119. Glu129 and Asp131 together coordinate Mn(2+). Residues Asp131 and Phe133 each coordinate Ca(2+). Ser138 and Asn139 together coordinate a carbohydrate. Residues Asn139 and Asp142 each contribute to the Ca(2+) site. Positions 142 and 147 each coordinate Mn(2+). Residues Gly221, Glu222, and Gln223 each coordinate a carbohydrate.

Belongs to the leguminous lectin family. In terms of assembly, homodimer.

Its function is as follows. Mannose/glucose-specific lectin that also binds derivatives N-acetyl-D-glucosamine and alpha-methyl-D-mannopyranoside with even higher affinity. Has hemagglutinating activity towards rabbit erythrocytes. Is toxic towards brine shrimp A.nauplii. In rats, induces dose-dependent paw edema. The protein is Mannose/glucose-specific lectin of Centrolobium tomentosum (Arariba).